A 473-amino-acid chain; its full sequence is 3-isopropylmalate dehydratase large subunit (473 aa).

3 residues coordinate [4Fe-4S] cluster: cysteine 351, cysteine 414, and cysteine 417.

It belongs to the aconitase/IPM isomerase family. LeuC type 1 subfamily. As to quaternary structure, heterodimer of LeuC and LeuD. It depends on [4Fe-4S] cluster as a cofactor.

It carries out the reaction (2R,3S)-3-isopropylmalate = (2S)-2-isopropylmalate. Its pathway is amino-acid biosynthesis; L-leucine biosynthesis; L-leucine from 3-methyl-2-oxobutanoate: step 2/4. Catalyzes the isomerization between 2-isopropylmalate and 3-isopropylmalate, via the formation of 2-isopropylmaleate. The sequence is that of 3-isopropylmalate dehydratase large subunit from Paracidovorax citrulli (strain AAC00-1) (Acidovorax citrulli).